Reading from the N-terminus, the 360-residue chain is MKLSQILTFASLLSGALAAPGKPHGKPGFASTSGLQFSIDGQTGYFAGSNSYWIGFLTNKADVDIGFNDVNTVPGEGTVYYQLHANGKSTINTGANGLQRMDYVVKSAEKHGIKLIINFVNNWDDYGGMNAYVKGYGAADHNDFYSNAKIQKAYRQYIRAVVSRYTKSDAVFAWELANEPRCKGCDTDVLYDWIKSTSEYIKSLDAKHMVCIGDEGFGLETLSDGSYPFTYVEGSDFARNLAIPTIDFGTFHLYPDSWGTSHEWGNLWTQAHGAACQAAGKPCLFEEYGVTSDHCALETPWQKTSLNTTGVSADLYWQYGDTLSSGPSPNDGHTVYYGTDDFKCMVTDHVAAIKAKQGWV.

A signal peptide spans 1–18; sequence MKLSQILTFASLLSGALA. Substrate is bound by residues N142 and N178. E179 acts as the Proton donor in catalysis. A substrate-binding site is contributed by Y254. E287 (nucleophile) is an active-site residue. N-linked (GlcNAc...) asparagine glycosylation is present at N307. W317 serves as a coordination point for substrate.

It belongs to the glycosyl hydrolase 5 (cellulase A) family.

It localises to the secreted. It catalyses the reaction Random hydrolysis of (1-&gt;4)-beta-D-mannosidic linkages in mannans, galactomannans and glucomannans.. Its function is as follows. Endo-1,4-mannanase, a crucial enzyme for depolymerization of seed galactomannans and wood galactoglucomannans. The sequence is that of Probable mannan endo-1,4-beta-mannosidase A (manA) from Aspergillus clavatus (strain ATCC 1007 / CBS 513.65 / DSM 816 / NCTC 3887 / NRRL 1 / QM 1276 / 107).